We begin with the raw amino-acid sequence, 100 residues long: Urease subunit gamma (100 aa).

This sequence belongs to the urease gamma subunit family. In terms of assembly, heterotrimer of UreA (gamma), UreB (beta) and UreC (alpha) subunits. Three heterotrimers associate to form the active enzyme.

The protein localises to the cytoplasm. It carries out the reaction urea + 2 H2O + H(+) = hydrogencarbonate + 2 NH4(+). Its pathway is nitrogen metabolism; urea degradation; CO(2) and NH(3) from urea (urease route): step 1/1. The protein is Urease subunit gamma of Nitrosococcus oceani (strain ATCC 19707 / BCRC 17464 / JCM 30415 / NCIMB 11848 / C-107).